The following is a 734-amino-acid chain: Photosystem I P700 chlorophyll a apoprotein A2 (734 aa).

The next 8 helical transmembrane spans lie at 46–69, 135–158, 175–199, 273–291, 330–353, 369–395, 417–439, and 517–535; these read IFASHFGQLAIIFLWTSGNLFHVA, LYTGALFLLFLSALSLIGGWLHLQ, LNHHLSGLFGVSSLAWTGHLVHVAI, MAHHHLAIAILFLIAGHMY, IHFQLGLALASLGVITSLVAQHMY, AALYTHHQYIAGFIMTGAFAHGAIFFI, AIISHLSWASLFLGFHTLGLYVH, and FLVHHAIALGLHTTTLILV. Residues Cys559 and Cys568 each coordinate [4Fe-4S] cluster. Transmembrane regions (helical) follow at residues 575–596 and 643–665; these read AFYLAVFWMLNTIGWVTFYWHW and LSVWAWMFLFGHLVWATGFMFLI. Residues His654, Met662, and Tyr670 each contribute to the chlorophyll a site. Trp671 is a phylloquinone binding site. A helical membrane pass occupies residues 707–727; sequence LVGLAHFSVGYIFTYAAFLIA.

It belongs to the PsaA/PsaB family. The PsaA/B heterodimer binds the P700 chlorophyll special pair and subsequent electron acceptors. PSI consists of a core antenna complex that captures photons, and an electron transfer chain that converts photonic excitation into a charge separation. The eukaryotic PSI reaction center is composed of at least 11 subunits. It depends on P700 is a chlorophyll a/chlorophyll a' dimer, A0 is one or more chlorophyll a, A1 is one or both phylloquinones and FX is a shared 4Fe-4S iron-sulfur center. as a cofactor.

Its subcellular location is the plastid. The protein resides in the chloroplast thylakoid membrane. The enzyme catalyses reduced [plastocyanin] + hnu + oxidized [2Fe-2S]-[ferredoxin] = oxidized [plastocyanin] + reduced [2Fe-2S]-[ferredoxin]. In terms of biological role, psaA and PsaB bind P700, the primary electron donor of photosystem I (PSI), as well as the electron acceptors A0, A1 and FX. PSI is a plastocyanin-ferredoxin oxidoreductase, converting photonic excitation into a charge separation, which transfers an electron from the donor P700 chlorophyll pair to the spectroscopically characterized acceptors A0, A1, FX, FA and FB in turn. Oxidized P700 is reduced on the lumenal side of the thylakoid membrane by plastocyanin. The polypeptide is Photosystem I P700 chlorophyll a apoprotein A2 (Arabis hirsuta (Hairy rock-cress)).